We begin with the raw amino-acid sequence, 105 residues long: uncharacterized protein (105 aa).

This is an uncharacterized protein from Archaeoglobus fulgidus (strain ATCC 49558 / DSM 4304 / JCM 9628 / NBRC 100126 / VC-16).